The following is a 354-amino-acid chain: 3'-5' exonuclease (354 aa).

A disordered region spans residues 1–120; that stretch reads MEKYLIKMPI…PSPEKEKPEK (120 aa). Basic and acidic residues-rich tracts occupy residues 13–23, 36–50, and 71–91; these read KASEVPKDKAV, TKND…KENA, and KNLD…ENPP. Residues serine 104, serine 110, and serine 112 each carry the phosphoserine modification. In terms of domain architecture, 3'-5' exonuclease spans 146 to 314; it reads VLQWVEKQKD…GQVIYRELER (169 aa). 3 residues coordinate Mg(2+): aspartate 163, glutamate 165, and aspartate 301.

It belongs to the WRNexo family.

Its subcellular location is the nucleus. Functionally, has exonuclease activity on both single-stranded and duplex templates bearing overhangs, but not blunt ended duplex DNA, and cleaves in a 3'-5' direction. Essential for the formation of DNA replication focal centers. Has an important role in maintaining genome stability. This Drosophila erecta (Fruit fly) protein is 3'-5' exonuclease.